Consider the following 426-residue polypeptide: 3-phosphoshikimate 1-carboxyvinyltransferase (426 aa).

Lys22, Ser23, and Arg27 together coordinate 3-phosphoshikimate. Lys22 contributes to the phosphoenolpyruvate binding site. 2 residues coordinate phosphoenolpyruvate: Gly96 and Arg124. 3-phosphoshikimate-binding residues include Ser170, Ser171, Gln172, Ser198, Asp314, Asn337, and Lys341. Residue Gln172 coordinates phosphoenolpyruvate. Residue Asp314 is the Proton acceptor of the active site. 3 residues coordinate phosphoenolpyruvate: Arg345, Arg387, and Lys412.

This sequence belongs to the EPSP synthase family. Monomer.

The protein resides in the cytoplasm. The catalysed reaction is 3-phosphoshikimate + phosphoenolpyruvate = 5-O-(1-carboxyvinyl)-3-phosphoshikimate + phosphate. It participates in metabolic intermediate biosynthesis; chorismate biosynthesis; chorismate from D-erythrose 4-phosphate and phosphoenolpyruvate: step 6/7. Its function is as follows. Catalyzes the transfer of the enolpyruvyl moiety of phosphoenolpyruvate (PEP) to the 5-hydroxyl of shikimate-3-phosphate (S3P) to produce enolpyruvyl shikimate-3-phosphate and inorganic phosphate. The chain is 3-phosphoshikimate 1-carboxyvinyltransferase from Shewanella sp. (strain W3-18-1).